The sequence spans 99 residues: Large ribosomal subunit protein uL23 (99 aa).

This sequence belongs to the universal ribosomal protein uL23 family. Part of the 50S ribosomal subunit. Contacts protein L29, and trigger factor when it is bound to the ribosome.

In terms of biological role, one of the early assembly proteins it binds 23S rRNA. One of the proteins that surrounds the polypeptide exit tunnel on the outside of the ribosome. Forms the main docking site for trigger factor binding to the ribosome. This chain is Large ribosomal subunit protein uL23, found in Xanthomonas axonopodis pv. citri (strain 306).